The sequence spans 521 residues: Riboflavin transporter MCH5 (521 aa).

Disordered stretches follow at residues 1-33 (MSSD…SIHY) and 65-96 (NKGT…NEEI). The Cytoplasmic portion of the chain corresponds to 1 to 103 (MSSDSLTPKD…EEIESFPEGG (103 aa)). The chain crosses the membrane as a helical span at residues 104-124 (FKAWVVTFGCFLGLIACFGLL). Residue Asn-125 is glycosylated (N-linked (GlcNAc...) asparagine). Topologically, residues 125–143 (NSTGVIESHLQDNQLSSES) are extracellular. The helical transmembrane segment at 144 to 164 (VSTIGWLFSLFLFVCSASCII) threads the bilayer. Residues 165–172 (SGTYFDRN) are Cytoplasmic-facing. Residues 173 to 193 (GFRTIMIVGTVFHVAGLFATA) traverse the membrane as a helical segment. Residue Asn-194 is glycosylated (N-linked (GlcNAc...) asparagine). At 194 to 200 (NSTKYWH) the chain is on the extracellular side. A helical membrane pass occupies residues 201-221 (FILSFAIVCGFGNGIVLSPLV). The Cytoplasmic portion of the chain corresponds to 222 to 233 (SVPAHYFFKRRG). The helical transmembrane segment at 234–254 (TALAMATIGGSVGGVVFPIML) threads the bilayer. At 255-269 (RSFFSMKSDTDPTYG) the chain is on the extracellular side. The chain crosses the membrane as a helical span at residues 270–290 (FVWGIRTLGFLDLALLTLSII). Residues 291–325 (LVKERLPHVIENSKDGESRWRYILRVYILQCFDAK) lie on the Cytoplasmic side of the membrane. Residues 326-346 (AFLDMKYLFCVLGTVFSELSI) form a helical membrane-spanning segment. Residues 347–367 (NSALTYYGSYATSHGISANDA) are Extracellular-facing. The chain crosses the membrane as a helical span at residues 368–388 (YTLIMIINVCGIPGRWVPGYL). Over 389–396 (SDKFGRFN) the chain is Cytoplasmic. A helical transmembrane segment spans residues 397 to 417 (VAIATLLTLFIVMFVGWLPFG). The Extracellular portion of the chain corresponds to 418 to 422 (TNLTN). N-linked (GlcNAc...) asparagine glycosylation occurs at Asn-419. The chain crosses the membrane as a helical span at residues 423–443 (MYVISALYGFCSGSVFSLLPV). Over 444–461 (CCGQISKTEEFGKRYSTM) the chain is Cytoplasmic. A helical transmembrane segment spans residues 462 to 482 (YFVVGFGTLVGIPITGAIISI). The Extracellular segment spans residues 483–487 (KTTAD). The chain crosses the membrane as a helical span at residues 488-508 (YQHYIIFCGLATFVSAVCYII). Residues 509–521 (SRAYCVGFKWVRF) lie on the Cytoplasmic side of the membrane.

This sequence belongs to the major facilitator superfamily. Monocarboxylate porter (TC 2.A.1.13) family.

The protein localises to the cell membrane. Riboflavin transporter involved in riboflavin (vitamin B2) uptake. Does not act in the transport of monocarboxylic acids across the plasma membrane. The protein is Riboflavin transporter MCH5 (MCH5) of Saccharomyces cerevisiae (strain ATCC 204508 / S288c) (Baker's yeast).